A 285-amino-acid polypeptide reads, in one-letter code: Bifunctional protein FolD (285 aa).

Residues 165 to 167 and Ser190 contribute to the NADP(+) site; that span reads GRS.

It belongs to the tetrahydrofolate dehydrogenase/cyclohydrolase family. As to quaternary structure, homodimer.

It catalyses the reaction (6R)-5,10-methylene-5,6,7,8-tetrahydrofolate + NADP(+) = (6R)-5,10-methenyltetrahydrofolate + NADPH. It carries out the reaction (6R)-5,10-methenyltetrahydrofolate + H2O = (6R)-10-formyltetrahydrofolate + H(+). It participates in one-carbon metabolism; tetrahydrofolate interconversion. Functionally, catalyzes the oxidation of 5,10-methylenetetrahydrofolate to 5,10-methenyltetrahydrofolate and then the hydrolysis of 5,10-methenyltetrahydrofolate to 10-formyltetrahydrofolate. The chain is Bifunctional protein FolD from Burkholderia mallei (strain NCTC 10247).